The sequence spans 231 residues: Orotidine 5'-phosphate decarboxylase (231 aa).

Substrate-binding positions include aspartate 12, lysine 34, 61-70 (DLKFHDIPNT), threonine 120, arginine 181, glutamine 190, glycine 210, and arginine 211. Lysine 63 functions as the Proton donor in the catalytic mechanism.

It belongs to the OMP decarboxylase family. Type 1 subfamily. Homodimer.

It carries out the reaction orotidine 5'-phosphate + H(+) = UMP + CO2. Its pathway is pyrimidine metabolism; UMP biosynthesis via de novo pathway; UMP from orotate: step 2/2. Its function is as follows. Catalyzes the decarboxylation of orotidine 5'-monophosphate (OMP) to uridine 5'-monophosphate (UMP). This chain is Orotidine 5'-phosphate decarboxylase, found in Alcanivorax borkumensis (strain ATCC 700651 / DSM 11573 / NCIMB 13689 / SK2).